Consider the following 71-residue polypeptide: Prokaryotic ubiquitin-like protein Pup (71 aa).

The span at 1–18 shows a compositional bias: basic and acidic residues; the sequence is MPEKDTGGQHRATRRTEE. Positions 1–36 are disordered; sequence MPEKDTGGQHRATRRTEEHDETIDEATATSDVQERR. Residues 27-65 form an ARC ATPase binding region; sequence TATSDVQERREKLDADVDAILDEIDDVLEENAEEFVRSY. The stretch at 30-59 forms a coiled coil; that stretch reads SDVQERREKLDADVDAILDEIDDVLEENAE. An Isoglutamyl lysine isopeptide (Glu-Lys) (interchain with K-? in acceptor proteins) cross-link involves residue E71.

The protein belongs to the prokaryotic ubiquitin-like protein family. In terms of assembly, strongly interacts with the proteasome-associated ATPase ARC through a hydrophobic interface; the interacting region of Pup lies in its C-terminal half. There is one Pup binding site per ARC hexamer ring.

It participates in protein degradation; proteasomal Pup-dependent pathway. Functionally, protein modifier that is covalently attached to lysine residues of substrate proteins, thereby targeting them for proteasomal degradation. The tagging system is termed pupylation. The polypeptide is Prokaryotic ubiquitin-like protein Pup (Acidothermus cellulolyticus (strain ATCC 43068 / DSM 8971 / 11B)).